We begin with the raw amino-acid sequence, 93 residues long: DNA-binding protein Fis (93 aa).

The segment at residues 74 to 93 (QTRAALMMGINRGTLRKKLK) is a DNA-binding region (H-T-H motif).

This sequence belongs to the transcriptional regulatory Fis family. In terms of assembly, homodimer.

Activates ribosomal RNA transcription. Plays a direct role in upstream activation of rRNA promoters. The sequence is that of DNA-binding protein Fis from Klebsiella pneumoniae.